A 291-amino-acid chain; its full sequence is MTTLAIDIGGTKLAAALIDNNLRISQRRELPTPASKTPDALREALKALVEPLRAEARQVAIASTGIIQEGMLLALNPHNLGGLLHFPLIQTLETIAGLPTLAVNDAQAAAWAEYHALPDDIRDMVFITVSTGVGGGVVCDGKLLTGKGGLAGHLGHTLADPHGPVCGCGRVGCVEAIASGRGMAAAARDDLAGCDAKTLFIRAGEGHQQARHLVSQSAQVIARMIADVKATTDCQCVVIGGSVGLAEGYLEQVRAFLMQEPAPYHVALNAARYRHDAGLLGAALLAQGDTL.

ATP is bound by residues 5-12 (AIDIGGTK) and 132-139 (GVGGGVVC). Positions 156, 166, 168, and 173 each coordinate Zn(2+).

Belongs to the ROK (NagC/XylR) family. NanK subfamily. As to quaternary structure, homodimer.

The enzyme catalyses an N-acyl-D-mannosamine + ATP = an N-acyl-D-mannosamine 6-phosphate + ADP + H(+). It participates in amino-sugar metabolism; N-acetylneuraminate degradation; D-fructose 6-phosphate from N-acetylneuraminate: step 2/5. Its function is as follows. Catalyzes the phosphorylation of N-acetylmannosamine (ManNAc) to ManNAc-6-P. This Salmonella paratyphi B (strain ATCC BAA-1250 / SPB7) protein is N-acetylmannosamine kinase.